The primary structure comprises 124 residues: uncharacterized protein (124 aa).

In terms of assembly, interacts with dil1.

This is an uncharacterized protein from Schizosaccharomyces pombe (strain 972 / ATCC 24843) (Fission yeast).